We begin with the raw amino-acid sequence, 571 residues long: RNA polymerase sigma factor SigA (571 aa).

A sigma-70 factor domain-2 region spans residues 321 to 391; that stretch reads MVESNLRLVI…TRAIADQART (71 aa). The Interaction with polymerase core subunit RpoC signature appears at 345–348; that stretch reads DLIQ. Residues 400–476 form a sigma-70 factor domain-3 region; the sequence is ETINKVLRGA…DTAVESPAEA (77 aa). The segment at 489 to 542 is sigma-70 factor domain-4; the sequence is VLKTLTDRERFVLIHRFGLLDGRPKTLEEVGSAFNVTRERIRQIEAKALRKMRH. A DNA-binding region (H-T-H motif) is located at residues 515-534; it reads LEEVGSAFNVTRERIRQIEA.

This sequence belongs to the sigma-70 factor family. RpoD/SigA subfamily. Interacts transiently with the RNA polymerase catalytic core.

The protein localises to the cytoplasm. In terms of biological role, sigma factors are initiation factors that promote the attachment of RNA polymerase to specific initiation sites and are then released. This sigma factor is the primary sigma factor during exponential growth. The polypeptide is RNA polymerase sigma factor SigA (Chlamydia trachomatis serovar D (strain ATCC VR-885 / DSM 19411 / UW-3/Cx)).